Consider the following 1152-residue polypeptide: MSSNIHANHLSLDASSSSSSSSSSSSSSSSSSSSVHEPKMDALIIPVTMEVPCDSRGQRMWWAFLASSMVTFFGGLFIILLWRTLKYLWTVCCHCGGKTKEAQKINNGASQADGTLKPVDEKEEVVAAEVGWMTSVKDWAGVMISAQTLTGRVLVVLVFALSIGALVIYFIDSSNPIESCQNFYKDFTLQIDMAFNVFFLLYFGLRFIAANDKLWFWLEVNSVVDFFTVPPVFVSVYLNRSWLGLRFLRALRLIQFSEILQFLNILKTSNSIKLVNLLSIFISTWLTAAGFIHLVENSGDPWENFQNNQALTYWECVYLLMVTMSTVGYGDVYAKTTLGRLFMVFFILGGLAMFASYVPEIIELIGNRKKYGGSYSAVSGRKHIVVCGHITLESVSNFLKDFLHKDRDDVNVEIVFLHNISPNLELEALFKRHFTQVEFYQGSVLNPHDLARVKIESADACLILANKYCADPDAEDASNIMRVISIKNYHPKIRIITQMLQYHNKAHLLNIPSWNWKEGDDAICLAELKLGFIAQSCLAQGLSTMLANLFSMRSFIKIEEDTWQKYYLEGVSNEMYTEYLSSAFVGLSFPTVCELCFVKLKLLMIAIEYKSANRESRILINPGNHLKIQEGTLGFFIASDAKEVKRAFFYCKACHDDITDPKRIKKCGCKRLEDEQPSTLSPKKKQRNGGMRNSPSSSPKLMRHDPLLIPGNDQIDNMDSNVKKYDSTGMFHWCAPKEIEKVILTRSEAAMTVLSGHVVVCIFGDVSSALIGLRNLVMPLRASNFHYHELKHIVFVGSIEYLKREWETLHNFPKVSILPGTPLSRADLRAVNINLCDMCVILSANQNNIDDTSLQDKECILASLNIKSMQFDDSIGVLQANSQGFTPPGMDRSSPDNSPVHGMLRQPSITTGVNIPIITELVNDTNVQFLDQDDDDDPDTELYLTQPFACGTAFAVSVLDSLMSATYFNDNILTLIRTLVTGGATPELEALIAEENALRGGYSTPQTLANRDRCRVAQLALLDGPFADLGDGGCYGDLFCKALKTYNMLCFGIYRLRDAHLSTPSQCTKRYVITNPPYEFELVPTDLIFCLMQFDHNAGQSRASLSHSSHSSQSSSKKSSSVHSIPSTANRQNRPKSRESRDKQKYVQEERL.

Positions M1–E37 are disordered. The Extracellular segment spans residues M1 to M60. The segment covering S15–S34 has biased composition (low complexity). Residues W61 to L81 form a helical membrane-spanning segment. Topologically, residues W82–R152 are cytoplasmic. S-palmitoyl cysteine attachment occurs at residues C92, C93, and C95. Residues V153 to S173 traverse the membrane as a helical segment. The Extracellular portion of the chain corresponds to S174 to T188. A helical transmembrane segment spans residues L189–A209. At A210–K213 the chain is on the cytoplasmic side. The helical transmembrane segment at L214–V234 threads the bilayer. At S235–L238 the chain is on the extracellular side. The helical; Voltage-sensor transmembrane segment at N239–I259 threads the bilayer. Residues L260–L274 are Cytoplasmic-facing. The helical transmembrane segment at V275 to V295 threads the bilayer. At E296 to Q309 the chain is on the extracellular side. An intramembrane region (pore-forming) is located at residues A310–V332. The short motif at T326–Y329 is the Selectivity for potassium element. Residues Y333–L341 are Extracellular-facing. A helical transmembrane segment spans residues F342–I362. The Cytoplasmic segment spans residues E363 to L1152. Residues R381 to I523 enclose the RCK N-terminal 1 domain. Residues E413, Q436, and E438 each contribute to the Mg(2+) site. A segment S7 region spans residues L530–F550. The tract at residues L587–I607 is segment S8. Residues C651–H655 form a heme-binding motif region. Residues E675–R703 form a disordered region. Phosphothreonine is present on T679. S681, S694, and S698 each carry phosphoserine. A segment S9 region spans residues V753–L773. Positions S755–P899 constitute an RCK N-terminal 2 domain. Phosphothreonine is present on T886. Phosphoserine occurs at positions 894 and 898. The short motif at T919–E941 is the Calcium bowl element. Residues Q928, D931, D934, and D936 each contribute to the Ca(2+) site. A segment S10 region spans residues F948–F968. Low complexity predominate over residues R1102 to S1127. Residues R1102–L1152 are disordered. Over residues K1136–L1152 the composition is skewed to basic and acidic residues. Residues S1137 and S1140 each carry the phosphoserine modification.

It belongs to the potassium channel family. Calcium-activated (TC 1.A.1.3) subfamily. KCa1.1/KCNMA1 sub-subfamily. Homotetramer; which constitutes the calcium-activated potassium channel. Interacts with beta subunits KCNMB1, KCNMB2, KCNMB3 and KCNMB4. Interacts with gamma subunits LRRC26, LRRC38, LRRC52 and LRRC55. Beta and gamma subunits are accessory, and modulate its activity. Interacts with RAB11B. Post-translationally, phosphorylated. Phosphorylation by kinases such as PKA and/or PKG. In smooth muscles, phosphorylation affects its activity. In terms of processing, palmitoylation by ZDHHC22 and ZDHHC23 within the intracellular linker between the S0 and S1 transmembrane domains regulates localization to the plasma membrane. Depalmitoylated by LYPLA1 and LYPLAL1, leading to retard exit from the trans-Golgi network.

It is found in the cell membrane. It carries out the reaction K(+)(in) = K(+)(out). Its activity is regulated as follows. Ethanol and carbon monoxide-bound heme increase channel activation. Heme inhibits channel activation. In terms of biological role, potassium channel activated by both membrane depolarization or increase in cytosolic Ca(2+) that mediates export of K(+). It is also activated by the concentration of cytosolic Mg(2+). Its activation dampens the excitatory events that elevate the cytosolic Ca(2+) concentration and/or depolarize the cell membrane. It therefore contributes to repolarization of the membrane potential. Plays a key role in controlling excitability in a number of systems, such as regulation of the contraction of smooth muscle, the tuning of hair cells in the cochlea, regulation of transmitter release, and innate immunity. In smooth muscles, its activation by high level of Ca(2+), caused by ryanodine receptors in the sarcoplasmic reticulum, regulates the membrane potential. In cochlea cells, its number and kinetic properties partly determine the characteristic frequency of each hair cell and thereby helps to establish a tonotopic map. Kinetics of KCNMA1 channels are determined by alternative splicing, phosphorylation status and its combination with modulating beta subunits. Highly sensitive to both iberiotoxin (IbTx) and charybdotoxin (CTX). This Sus scrofa (Pig) protein is Calcium-activated potassium channel subunit alpha-1 (KCNMA1).